Here is a 233-residue protein sequence, read N- to C-terminus: MKVGIIGAMEEEVTLLRDRIENRQTLARAGCEIYTGQLNGIDVALLKSGIGKVAAAMGTTLLLEHCQPDLVINTGSAGGLDSSLKVGDIVVSNEVRYHDADVTAFGYEPGQMAGCPAAFVADEDLIALAENCIQQLKLNAVRGLICSGDAFINGAEPLARIRAAFPTVAAVEMEAAAIGHVCYLFNTPFVVVRAISDVADQASHLSFEEFLVVAAKQSTLMIKAMLTTLAQRG.

Catalysis depends on Glu-12, which acts as the Proton acceptor. Substrate contacts are provided by residues Gly-78, Ile-152, and 173–174; that span reads ME. The Proton donor role is filled by Asp-197.

This sequence belongs to the PNP/UDP phosphorylase family. MtnN subfamily. As to quaternary structure, homodimer.

It catalyses the reaction S-adenosyl-L-homocysteine + H2O = S-(5-deoxy-D-ribos-5-yl)-L-homocysteine + adenine. The enzyme catalyses S-methyl-5'-thioadenosine + H2O = 5-(methylsulfanyl)-D-ribose + adenine. The catalysed reaction is 5'-deoxyadenosine + H2O = 5-deoxy-D-ribose + adenine. Its pathway is amino-acid biosynthesis; L-methionine biosynthesis via salvage pathway; S-methyl-5-thio-alpha-D-ribose 1-phosphate from S-methyl-5'-thioadenosine (hydrolase route): step 1/2. In terms of biological role, catalyzes the irreversible cleavage of the glycosidic bond in both 5'-methylthioadenosine (MTA) and S-adenosylhomocysteine (SAH/AdoHcy) to adenine and the corresponding thioribose, 5'-methylthioribose and S-ribosylhomocysteine, respectively. Also cleaves 5'-deoxyadenosine, a toxic by-product of radical S-adenosylmethionine (SAM) enzymes, into 5-deoxyribose and adenine. Thus, is required for in vivo function of the radical SAM enzymes biotin synthase and lipoic acid synthase, that are inhibited by 5'-deoxyadenosine accumulation. This chain is 5'-methylthioadenosine/S-adenosylhomocysteine nucleosidase, found in Yersinia pestis bv. Antiqua (strain Angola).